We begin with the raw amino-acid sequence, 145 residues long: Peptide methionine sulfoxide reductase MsrB (145 aa).

The MsrB domain maps to 6–129; it reads KNERLQQLTD…NSAALRFIPV (124 aa). Cys118 (nucleophile) is an active-site residue.

The protein belongs to the MsrB Met sulfoxide reductase family.

It catalyses the reaction L-methionyl-[protein] + [thioredoxin]-disulfide + H2O = L-methionyl-(R)-S-oxide-[protein] + [thioredoxin]-dithiol. This chain is Peptide methionine sulfoxide reductase MsrB, found in Listeria monocytogenes serotype 4a (strain HCC23).